A 172-amino-acid chain; its full sequence is MELKTSDVAIRLGVSPKTIQRWVRKYNIPLRRNEAGHYLFDEKTVALLERVKFEQGAAMEAPPTPKRPPTPLRNNIPIDALHESIEPEIARVSSRLDQLERQLEQKADDVVSIQLLHHRQEMEEIVARLTALEQLVARLEQQLNNRPPSSHETSDEPKQKRRGLGRVMGLFA.

The H-T-H motif DNA-binding region spans 5-25 (TSDVAIRLGVSPKTIQRWVRK). Disordered stretches follow at residues 57 to 76 (AAME…RNNI) and 142 to 172 (QLNN…GLFA). Pro residues predominate over residues 62-71 (PPTPKRPPTP). A coiled-coil region spans residues 83–146 (ESIEPEIARV…ARLEQQLNNR (64 aa)). Positions 142 to 151 (QLNNRPPSSH) are enriched in polar residues.

Belongs to the RacA family.

Its subcellular location is the cytoplasm. Functionally, required for the formation of axial filaments and for anchoring the origin regions at the cell poles in sporulating cells, thus ensuring proper chromosome segregation in the prespore. Binds in a dispersed manner throughout the chromosome but preferentially to sites clustered in the origin portion of the chromosome, causing condensation of the chromosome and its remodeling into an elongated, anchored structure. The chain is Chromosome-anchoring protein RacA from Geobacillus kaustophilus (strain HTA426).